We begin with the raw amino-acid sequence, 422 residues long: 26S proteasome non-ATPase regulatory subunit 11 (422 aa).

An N-acetylalanine modification is found at A2. Phosphoserine occurs at positions 14 and 23. A PCI domain is found at 224 to 392; it reads DWKTAYSYFY…GVLIIFDEPP (169 aa). A Glycyl lysine isopeptide (Lys-Gly) (interchain with G-Cter in SUMO2) cross-link involves residue K274.

This sequence belongs to the proteasome subunit S9 family. Component of the 19S proteasome regulatory particle complex. The 26S proteasome consists of a 20S core particle (CP) and two 19S regulatory subunits (RP). The regulatory particle is made of a lid composed of 9 subunits including PSMD11, a base containing 6 ATPases and few additional components. Phosphorylated by AMPK.

The protein resides in the nucleus. Its subcellular location is the cytoplasm. It localises to the cytosol. Functionally, component of the 26S proteasome, a multiprotein complex involved in the ATP-dependent degradation of ubiquitinated proteins. This complex plays a key role in the maintenance of protein homeostasis by removing misfolded or damaged proteins, which could impair cellular functions, and by removing proteins whose functions are no longer required. Therefore, the proteasome participates in numerous cellular processes, including cell cycle progression, apoptosis, or DNA damage repair. In the complex, PSMD11 is required for proteasome assembly. Plays a key role in increased proteasome activity in embryonic stem cells (ESCs): its high expression in ESCs promotes enhanced assembly of the 26S proteasome, followed by higher proteasome activity. The polypeptide is 26S proteasome non-ATPase regulatory subunit 11 (PSMD11) (Bos taurus (Bovine)).